The chain runs to 104 residues: ATP-dependent Clp protease adapter protein ClpS (104 aa).

The protein belongs to the ClpS family. In terms of assembly, binds to the N-terminal domain of the chaperone ClpA.

Its function is as follows. Involved in the modulation of the specificity of the ClpAP-mediated ATP-dependent protein degradation. The polypeptide is ATP-dependent Clp protease adapter protein ClpS (Paraburkholderia phymatum (strain DSM 17167 / CIP 108236 / LMG 21445 / STM815) (Burkholderia phymatum)).